The primary structure comprises 44 residues: Large ribosomal subunit protein bL34 (44 aa).

The protein belongs to the bacterial ribosomal protein bL34 family.

In Ehrlichia ruminantium (strain Gardel), this protein is Large ribosomal subunit protein bL34.